A 333-amino-acid polypeptide reads, in one-letter code: Ribosomal RNA small subunit methyltransferase H (333 aa).

Residues 43–45 (GGH), Asp62, Tyr89, Asp110, and Gln117 contribute to the S-adenosyl-L-methionine site. Residues 312–333 (RLRAARRIRTTPTRPSPRRRRP) form a disordered region.

This sequence belongs to the methyltransferase superfamily. RsmH family.

Its subcellular location is the cytoplasm. The catalysed reaction is cytidine(1402) in 16S rRNA + S-adenosyl-L-methionine = N(4)-methylcytidine(1402) in 16S rRNA + S-adenosyl-L-homocysteine + H(+). In terms of biological role, specifically methylates the N4 position of cytidine in position 1402 (C1402) of 16S rRNA. This chain is Ribosomal RNA small subunit methyltransferase H, found in Beutenbergia cavernae (strain ATCC BAA-8 / DSM 12333 / CCUG 43141 / JCM 11478 / NBRC 16432 / NCIMB 13614 / HKI 0122).